The following is a 363-amino-acid chain: Histidinol-phosphate aminotransferase (363 aa).

At K226 the chain carries N6-(pyridoxal phosphate)lysine.

This sequence belongs to the class-II pyridoxal-phosphate-dependent aminotransferase family. Histidinol-phosphate aminotransferase subfamily. In terms of assembly, homodimer. Requires pyridoxal 5'-phosphate as cofactor.

The enzyme catalyses L-histidinol phosphate + 2-oxoglutarate = 3-(imidazol-4-yl)-2-oxopropyl phosphate + L-glutamate. It functions in the pathway amino-acid biosynthesis; L-histidine biosynthesis; L-histidine from 5-phospho-alpha-D-ribose 1-diphosphate: step 7/9. The sequence is that of Histidinol-phosphate aminotransferase from Campylobacter lari (strain RM2100 / D67 / ATCC BAA-1060).